The chain runs to 228 residues: Geranylgeranylglyceryl phosphate synthase (228 aa).

Lys-13 contacts sn-glycerol 1-phosphate. Residues Asp-15 and Thr-41 each coordinate Mg(2+). Sn-glycerol 1-phosphate-binding positions include 159 to 164, Gly-189, and 209 to 210; these read YIEYSG and GN.

The protein belongs to the GGGP/HepGP synthase family. Group I subfamily. Requires Mg(2+) as cofactor.

Its subcellular location is the cytoplasm. It catalyses the reaction sn-glycerol 1-phosphate + (2E,6E,10E)-geranylgeranyl diphosphate = sn-3-O-(geranylgeranyl)glycerol 1-phosphate + diphosphate. The protein operates within membrane lipid metabolism; glycerophospholipid metabolism. Prenyltransferase that catalyzes the transfer of the geranylgeranyl moiety of geranylgeranyl diphosphate (GGPP) to the C3 hydroxyl of sn-glycerol-1-phosphate (G1P). This reaction is the first ether-bond-formation step in the biosynthesis of archaeal membrane lipids. The chain is Geranylgeranylglyceryl phosphate synthase from Methanospirillum hungatei JF-1 (strain ATCC 27890 / DSM 864 / NBRC 100397 / JF-1).